The sequence spans 45 residues: Conotoxin reg3.12 (45 aa).

Positions 1–31 are excised as a propeptide; sequence DQPVERHAGNKRHLNPTIRRAMIIDANRREK. 3 cysteine pairs are disulfide-bonded: cysteine 32–cysteine 44, cysteine 33–cysteine 42, and cysteine 38–cysteine 45.

This sequence belongs to the conotoxin M superfamily. Expressed by the venom duct.

It localises to the secreted. The sequence is that of Conotoxin reg3.12 from Conus regius (Crown cone).